The following is a 156-amino-acid chain: Ribosomal RNA large subunit methyltransferase H (156 aa).

Residues leucine 74, glycine 105, and leucine 124–leucine 129 contribute to the S-adenosyl-L-methionine site.

Belongs to the RNA methyltransferase RlmH family. Homodimer.

It is found in the cytoplasm. The enzyme catalyses pseudouridine(1915) in 23S rRNA + S-adenosyl-L-methionine = N(3)-methylpseudouridine(1915) in 23S rRNA + S-adenosyl-L-homocysteine + H(+). Functionally, specifically methylates the pseudouridine at position 1915 (m3Psi1915) in 23S rRNA. This Legionella pneumophila (strain Paris) protein is Ribosomal RNA large subunit methyltransferase H.